A 186-amino-acid chain; its full sequence is Mitochondrial import inner membrane translocase subunit Tim22 (186 aa).

2 cysteine pairs are disulfide-bonded: Cys61/Cys133 and Cys152/Cys171. The next 3 helical transmembrane spans lie at 66–86 (ALAC…TAGI), 117–135 (YAKN…ECLV), and 162–182 (AGLK…AVID).

It belongs to the Tim17/Tim22/Tim23 family. As to quaternary structure, core component of the TIM22 complex.

The protein localises to the mitochondrion inner membrane. Essential core component of the TIM22 complex, a complex that mediates the import and insertion of multi-pass transmembrane proteins into the mitochondrial inner membrane. In the TIM22 complex, it constitutes the voltage-activated and signal-gated channel. Forms a twin-pore translocase that uses the membrane potential as external driving force in 2 voltage-dependent steps. This is Mitochondrial import inner membrane translocase subunit Tim22 (timm22) from Xenopus tropicalis (Western clawed frog).